The sequence spans 358 residues: Probable dual-specificity RNA methyltransferase RlmN 2 (358 aa).

E90 (proton acceptor) is an active-site residue. A Radical SAM core domain is found at 96–328; the sequence is SGIRRTVCVS…VNTCRYTKGD (233 aa). A disulfide bridge connects residues C103 and C334. Residues C110, C114, and C117 each contribute to the [4Fe-4S] cluster site. S-adenosyl-L-methionine is bound by residues 160–161, S192, 215–217, and N291; these read GE and SLH. Catalysis depends on C334, which acts as the S-methylcysteine intermediate.

The protein belongs to the radical SAM superfamily. RlmN family. [4Fe-4S] cluster serves as cofactor.

The protein localises to the cytoplasm. It catalyses the reaction adenosine(2503) in 23S rRNA + 2 reduced [2Fe-2S]-[ferredoxin] + 2 S-adenosyl-L-methionine = 2-methyladenosine(2503) in 23S rRNA + 5'-deoxyadenosine + L-methionine + 2 oxidized [2Fe-2S]-[ferredoxin] + S-adenosyl-L-homocysteine. The enzyme catalyses adenosine(37) in tRNA + 2 reduced [2Fe-2S]-[ferredoxin] + 2 S-adenosyl-L-methionine = 2-methyladenosine(37) in tRNA + 5'-deoxyadenosine + L-methionine + 2 oxidized [2Fe-2S]-[ferredoxin] + S-adenosyl-L-homocysteine. Specifically methylates position 2 of adenine 2503 in 23S rRNA and position 2 of adenine 37 in tRNAs. The sequence is that of Probable dual-specificity RNA methyltransferase RlmN 2 from Protochlamydia amoebophila (strain UWE25).